A 147-amino-acid polypeptide reads, in one-letter code: Large ribosomal subunit protein uL13 (147 aa).

Belongs to the universal ribosomal protein uL13 family. As to quaternary structure, part of the 50S ribosomal subunit.

Its function is as follows. This protein is one of the early assembly proteins of the 50S ribosomal subunit, although it is not seen to bind rRNA by itself. It is important during the early stages of 50S assembly. In Paenarthrobacter aurescens (strain TC1), this protein is Large ribosomal subunit protein uL13.